Here is a 502-residue protein sequence, read N- to C-terminus: ATP synthase subunit alpha (502 aa).

The tract at residues Gly119–Arg139 is disordered. Gly169 to Thr176 contacts ATP.

This sequence belongs to the ATPase alpha/beta chains family. In terms of assembly, F-type ATPases have 2 components, CF(1) - the catalytic core - and CF(0) - the membrane proton channel. CF(1) has five subunits: alpha(3), beta(3), gamma(1), delta(1), epsilon(1). CF(0) has three main subunits: a(1), b(2) and c(9-12). The alpha and beta chains form an alternating ring which encloses part of the gamma chain. CF(1) is attached to CF(0) by a central stalk formed by the gamma and epsilon chains, while a peripheral stalk is formed by the delta and b chains.

The protein localises to the cell membrane. It carries out the reaction ATP + H2O + 4 H(+)(in) = ADP + phosphate + 5 H(+)(out). Its function is as follows. Produces ATP from ADP in the presence of a proton gradient across the membrane. The alpha chain is a regulatory subunit. This Alkalihalophilus pseudofirmus (strain ATCC BAA-2126 / JCM 17055 / OF4) (Bacillus pseudofirmus) protein is ATP synthase subunit alpha.